Consider the following 130-residue polypeptide: UPF0102 protein SCO5602 (130 aa).

The protein belongs to the UPF0102 family.

This is UPF0102 protein SCO5602 from Streptomyces coelicolor (strain ATCC BAA-471 / A3(2) / M145).